The primary structure comprises 205 residues: uncharacterized protein (205 aa).

Positions 10–75 form a coiled coil; sequence QDLLSAVDQQ…AANLMTVMTD (66 aa). Residues 111–138 form a disordered region; sequence PLSNTNNEQTSPPASGKTSETPKKNPTN. A compositionally biased stretch (polar residues) spans 112–138; that stretch reads LSNTNNEQTSPPASGKTSETPKKNPTN.

The protein belongs to the asfivirus K205R family.

It is found in the host cytoplasm. In terms of biological role, induces host endoplasmic reticulum stress and consequently activates autophagy and NF-kappa-B signaling pathway. In turn, may induce autophagy-mediated STING1 degradation and innate immune evasion. This is an uncharacterized protein from Ornithodoros (relapsing fever ticks).